Consider the following 289-residue polypeptide: 5'-3' exonuclease (289 aa).

The 5'-3' exonuclease domain occupies 166-256; the sequence is VEPQKIPDYL…EEDLKIKRPD (91 aa).

In terms of biological role, 5'-3' exonuclease acting preferentially on double-stranded DNA. The protein is 5'-3' exonuclease of Aquifex aeolicus (strain VF5).